The chain runs to 604 residues: MPKISIHEALFFELLGERCDDDTLERRLRSAKAELECSSFSVREDKEGGSLSPGGEVCDPVQRTRGQASCVREGAFDARLLKIELNDTNRPDLWSTAGLARLLRVHAGGASRAAQYRAFLSDRCTVRDSYGRCVVVDARLQTIRPFIAGFVARGTGLSEVRLWDLIQTQERLASNFGRRRCTLSLGCYRAQDICWPLAYRAVLLAEVSFTPLGMSMPLSGEQILTQHPKGREYGHLLKDYSFVPLLVDARGEVLSLIPITNSASLGAVVTGDTELFIECSGTDMCAVLVAVNSLACDLSDMGMQIEPVQITYSFDTPWGRSVTTPFYFQEKREVAHEQIDRLLGMPLPVADITEAFARMDCAVQVKQGTYVVEPAAYRNDFLHAVDLIEEVMLGRTLDRFSPQVPCSFTVGRLSDLTLLTRKIKHLLVGFGYQEMIFHYLGSAREFCTRMRCTADDLIEIENPLTESYRFVRRSIIPCLLSAELKSAHALYPHRIFEIGKVAFCSPHGEHGTCTQQSLGFLNASQEASYNEVASLVSGLLYCLKLPYQVEEAQDPRFVLGRQASICVHGSRVGIFGEIHPQVLSNWDIRMPCFAGELDVGALLP.

In terms of domain architecture, B5 spans 327–402 (YFQEKREVAH…LGRTLDRFSP (76 aa)). 4 residues coordinate Mg(2+): Asp380, Asp386, Glu389, and Glu390.

It belongs to the phenylalanyl-tRNA synthetase beta subunit family. Type 2 subfamily. As to quaternary structure, tetramer of two alpha and two beta subunits. Requires Mg(2+) as cofactor.

Its subcellular location is the cytoplasm. The enzyme catalyses tRNA(Phe) + L-phenylalanine + ATP = L-phenylalanyl-tRNA(Phe) + AMP + diphosphate + H(+). This chain is Phenylalanine--tRNA ligase beta subunit, found in Treponema pallidum subsp. pallidum (strain SS14).